The sequence spans 336 residues: tRNA N6-adenosine threonylcarbamoyltransferase (336 aa).

Fe cation contacts are provided by H112 and H116. Residues 136 to 140 (LVSGG), D169, G182, and N276 contribute to the substrate site. Fe cation is bound at residue D304.

The protein belongs to the KAE1 / TsaD family. Fe(2+) is required as a cofactor.

It is found in the cytoplasm. The enzyme catalyses L-threonylcarbamoyladenylate + adenosine(37) in tRNA = N(6)-L-threonylcarbamoyladenosine(37) in tRNA + AMP + H(+). Its function is as follows. Required for the formation of a threonylcarbamoyl group on adenosine at position 37 (t(6)A37) in tRNAs that read codons beginning with adenine. Is involved in the transfer of the threonylcarbamoyl moiety of threonylcarbamoyl-AMP (TC-AMP) to the N6 group of A37, together with TsaE and TsaB. TsaD likely plays a direct catalytic role in this reaction. The protein is tRNA N6-adenosine threonylcarbamoyltransferase of Francisella tularensis subsp. novicida (strain U112).